Here is a 35-residue protein sequence, read N- to C-terminus: Photosystem II reaction center protein T (35 aa).

Residues 3–23 (ALVYTFLLVSTLGIIFFAIFF) traverse the membrane as a helical segment.

This sequence belongs to the PsbT family. As to quaternary structure, PSII is composed of 1 copy each of membrane proteins PsbA, PsbB, PsbC, PsbD, PsbE, PsbF, PsbH, PsbI, PsbJ, PsbK, PsbL, PsbM, PsbT, PsbY, PsbZ, Psb30/Ycf12, at least 3 peripheral proteins of the oxygen-evolving complex and a large number of cofactors. It forms dimeric complexes.

The protein resides in the plastid. It is found in the chloroplast thylakoid membrane. Functionally, found at the monomer-monomer interface of the photosystem II (PS II) dimer, plays a role in assembly and dimerization of PSII. PSII is a light-driven water plastoquinone oxidoreductase, using light energy to abstract electrons from H(2)O, generating a proton gradient subsequently used for ATP formation. This chain is Photosystem II reaction center protein T, found in Asarum canadense (Wild ginger).